A 522-amino-acid chain; its full sequence is Probable protein kinase UbiB (522 aa).

The 378-residue stretch at 119–496 folds into the Protein kinase domain; it reads SFDADPVASA…QRRTNRLLLT (378 aa). Residues 125 to 133 and K147 contribute to the ATP site; that span reads VASASIAQV. D282 serves as the catalytic Proton acceptor. Residues 494–514 form a helical membrane-spanning segment; the sequence is LLTVFYLIGGFVAGGLFAHWI.

The protein belongs to the ABC1 family. UbiB subfamily.

The protein resides in the cell inner membrane. The protein operates within cofactor biosynthesis; ubiquinone biosynthesis [regulation]. Is probably a protein kinase regulator of UbiI activity which is involved in aerobic coenzyme Q (ubiquinone) biosynthesis. This chain is Probable protein kinase UbiB, found in Leptothrix cholodnii (strain ATCC 51168 / LMG 8142 / SP-6) (Leptothrix discophora (strain SP-6)).